The following is a 379-amino-acid chain: Galactose-1-phosphate uridylyltransferase (379 aa).

Basic and acidic residues predominate over residues 1–10 (MSHSGADPEQ). The disordered stretch occupies residues 1–20 (MSHSGADPEQRQQASEADAM). Cys-75 serves as a coordination point for Zn(2+). Residues Ala-81, 97–98 (ND), and Asn-173 each bind UDP-alpha-D-glucose. His-184 serves as a coordination point for Zn(2+). Residue His-186 is the Tele-UMP-histidine intermediate of the active site. Gln-188 contributes to the UDP-alpha-D-glucose binding site. Residues Glu-202, His-301, His-319, and His-321 each contribute to the Zn(2+) site. Residues 334-337 (KFMV) and 339-340 (YE) contribute to the UDP-alpha-D-glucose site.

The protein belongs to the galactose-1-phosphate uridylyltransferase type 1 family. Homodimer. The cofactor is Zn(2+).

It catalyses the reaction alpha-D-galactose 1-phosphate + UDP-alpha-D-glucose = alpha-D-glucose 1-phosphate + UDP-alpha-D-galactose. It participates in carbohydrate metabolism; galactose metabolism. Plays an important role in galactose metabolism. The polypeptide is Galactose-1-phosphate uridylyltransferase (Galt) (Mus musculus (Mouse)).